A 148-amino-acid polypeptide reads, in one-letter code: UPF0756 membrane protein ETA_17460 (148 aa).

The next 4 membrane-spanning stretches (helical) occupy residues 14-34 (ALSY…LIVI), 51-71 (MTVG…SGTI), 80-100 (FLHW…WLGG), and 112-132 (VVGG…GVPV).

This sequence belongs to the UPF0756 family.

The protein resides in the cell membrane. This Erwinia tasmaniensis (strain DSM 17950 / CFBP 7177 / CIP 109463 / NCPPB 4357 / Et1/99) protein is UPF0756 membrane protein ETA_17460.